The following is a 331-amino-acid chain: MTYELSTDREFDLIAIGRACIDLNAVEYNRPMEETMTFSKYVGGSPANIVIGSSKLGLKAGFIGKIADDQHGRFIESYMRGVGVDTSNLVVDQEGHKTGLAFTEIKSPEECSILMYRQDVADLYLSPEEVNEAYIRRSKLLLVSGTALSKSPSREAVLKAIRLAKRNDVKVVFELDYRPYSWETPEETAVYYSLVAEQSDIVIGTREEFDVLENRTEKGDNDETIRYLFKHSPELIVIKHGVEGSFAYTKAGEAYRGYAYKTKVLKTFGAGDSYASAFLYALISGKGIETALKYGSASASIVVSKHSSSDAMPSVEEIEALIEKDETITIA.

This sequence belongs to the carbohydrate kinase PfkB family.

The catalysed reaction is 5-dehydro-2-deoxy-D-gluconate + ATP = 6-phospho-5-dehydro-2-deoxy-D-gluconate + ADP + H(+). It participates in polyol metabolism; myo-inositol degradation into acetyl-CoA; acetyl-CoA from myo-inositol: step 5/7. Catalyzes the phosphorylation of 5-dehydro-2-deoxy-D-gluconate (2-deoxy-5-keto-D-gluconate or DKG) to 6-phospho-5-dehydro-2-deoxy-D-gluconate (DKGP). This chain is 5-dehydro-2-deoxygluconokinase, found in Halalkalibacterium halodurans (strain ATCC BAA-125 / DSM 18197 / FERM 7344 / JCM 9153 / C-125) (Bacillus halodurans).